We begin with the raw amino-acid sequence, 422 residues long: Dihydrolipoyllysine-residue succinyltransferase component of 2-oxoglutarate dehydrogenase complex (422 aa).

One can recognise a Lipoyl-binding domain in the interval 1–76; it reads MPEVKVPELA…EVGQAIAIIG (76 aa). Lysine 42 carries the post-translational modification N6-lipoyllysine. The tract at residues 77–185 is disordered; sequence EGSGNASKEN…SAKEEKKYNQ (109 aa). Composition is skewed to polar residues over residues 80–94 and 116–130; these read GNAS…TPQQ and NQAN…NATP. In terms of domain architecture, Peripheral subunit-binding (PSBD) spans 127-163; it reads NATPSARRYARENGVNLAEVSPKTNDVVRKEDIDKKQ. The segment covering 152 to 163 has biased composition (basic and acidic residues); that stretch reads DVVRKEDIDKKQ. The segment covering 164–176 has biased composition (low complexity); the sequence is QAPASTQTTQQAS. Residues histidine 393 and aspartate 397 contribute to the active site.

Belongs to the 2-oxoacid dehydrogenase family. In terms of assembly, forms a 24-polypeptide structural core with octahedral symmetry. Part of the 2-oxoglutarate dehydrogenase (OGDH) complex composed of E1 (2-oxoglutarate dehydrogenase), E2 (dihydrolipoamide succinyltransferase) and E3 (dihydrolipoamide dehydrogenase); the complex contains multiple copies of the three enzymatic components (E1, E2 and E3). It depends on (R)-lipoate as a cofactor.

The catalysed reaction is N(6)-[(R)-dihydrolipoyl]-L-lysyl-[protein] + succinyl-CoA = N(6)-[(R)-S(8)-succinyldihydrolipoyl]-L-lysyl-[protein] + CoA. It participates in amino-acid degradation; L-lysine degradation via saccharopine pathway; glutaryl-CoA from L-lysine: step 6/6. In terms of biological role, E2 component of the 2-oxoglutarate dehydrogenase (OGDH) complex which catalyzes the second step in the conversion of 2-oxoglutarate to succinyl-CoA and CO(2). The chain is Dihydrolipoyllysine-residue succinyltransferase component of 2-oxoglutarate dehydrogenase complex (odhB) from Staphylococcus aureus (strain USA300).